The sequence spans 657 residues: Methyl-accepting chemotaxis protein CtpL (657 aa).

Topologically, residues 1–5 (MRLKQ) are cytoplasmic. Residues 6-26 (LTNLNTLLLLTVCLALGITLW) traverse the membrane as a helical segment. The Periplasmic segment spans residues 27–305 (WSQRAMERPF…ERQRLQGQVR (279 aa)). A helical membrane pass occupies residues 306-326 (LIQGGMIALILLIALAIDSLQ). The 54-residue stretch at 327 to 380 (RRLARVLGQLVPALSAWADGDFSRPISLRTRTEDLRNLEDSLNRLRSFLAELVG) folds into the HAMP domain. Over 327 to 657 (RRLARVLGQL…LRTTVQAFRL (331 aa)) the chain is Cytoplasmic. The Methyl-accepting transducer domain maps to 385-621 (RAEQVAGSSQ…EIRSHSERIH (237 aa)).

Belongs to the methyl-accepting chemotaxis (MCP) protein family.

The protein resides in the cell inner membrane. Chemotactic-signal transducers respond to changes in the concentration of attractants and repellents in the environment, transduce a signal from the outside to the inside of the cell, and facilitate sensory adaptation through the variation of the level of methylation. Chemoreceptor for inorganic phosphate, which is required for taxis at low concentrations of phosphate. Is also responsible for the positive chemotaxis toward 4-chloroaniline (4CA) and catechol. Does not recognize inorganic phosphate directly, but via a complex between the periplasmic protein PstS and inorganic phosphate. The chain is Methyl-accepting chemotaxis protein CtpL from Pseudomonas aeruginosa (strain ATCC 15692 / DSM 22644 / CIP 104116 / JCM 14847 / LMG 12228 / 1C / PRS 101 / PAO1).